The sequence spans 734 residues: Translation initiation factor IF-2 (734 aa).

Residues 39–110 (SKFAPRSSFT…TGKPETKKRE (72 aa)) are disordered. The segment covering 82-110 (DYEKRKLAEQRATRRLKGDTGKPETKKRE) has biased composition (basic and acidic residues). Residues 238–405 (NRPPIVTVMG…SIVLQAEILD (168 aa)) enclose the tr-type G domain. Residues 247-254 (GHVDHGKT) form a G1 region. 247–254 (GHVDHGKT) contacts GTP. A G2 region spans residues 272-276 (GITQH). Residues 293 to 296 (DTPG) are G3. GTP contacts are provided by residues 293 to 297 (DTPGH) and 347 to 350 (NKCD). The G4 stretch occupies residues 347 to 350 (NKCD). Positions 383-385 (SAK) are G5.

Belongs to the TRAFAC class translation factor GTPase superfamily. Classic translation factor GTPase family. IF-2 subfamily.

Its subcellular location is the cytoplasm. In terms of biological role, one of the essential components for the initiation of protein synthesis. Protects formylmethionyl-tRNA from spontaneous hydrolysis and promotes its binding to the 30S ribosomal subunits. Also involved in the hydrolysis of GTP during the formation of the 70S ribosomal complex. The protein is Translation initiation factor IF-2 of Pelagibacter ubique (strain HTCC1062).